The primary structure comprises 339 residues: MAMQMQLEASADTSVEEESFGPQPISRLEQCGINANDVKKLEEAGYHTVEAVAYAPKKELINIKGISEAKADKILTEAAKLVPMGFTTATEFHQRRSEIIQITTGSKELDKLLQGGIETGSITEMFGEFRTGKTQICHTLAVTCQLPIDRGGGEGKAMYIDTEGTFRPERLLAVAERYGLSGSDVLDNVAYARGFNTDHQTQLLYQASAMMVESRYALLIVDSATALYRTDYSGRGELSARQMHLARFLRMLLRLADEFGVAVVITNQVVAQVDGAAMFAADPKKPIGGNIIAHASTTRLYLRKGRGETRICKIYDSPCLPEAEAMFAINADGVGDAKD.

Positions 1–22 are disordered; it reads MAMQMQLEASADTSVEEESFGP. A2 is modified (N-acetylalanine). T13 carries the phosphothreonine modification. Position 14 is a phosphoserine (S14). Residues 48 to 77 form the HhH domain; sequence TVEAVAYAPKKELINIKGISEAKADKILTE. Phosphotyrosine; by ABL1 is present on Y54. Glycyl lysine isopeptide (Lys-Gly) (interchain with G-Cter in ubiquitin) cross-links involve residues K58 and K64. 127 to 134 is an ATP binding site; it reads GEFRTGKT. The interval 184 to 257 is interaction with PALB2; it reads DVLDNVAYAR…FLRMLLRLAD (74 aa). The Nuclear export signal; masked by the interaction with BRCA2 signature appears at 245-260; that stretch reads LARFLRMLLRLADEFG. Position 309 is a phosphothreonine; by CHEK1 (T309).

It belongs to the RecA family. RAD51 subfamily. Forms linear homooligomers, giving rise to a RAD51 nucleoprotein filament, which is essential for strand-pairing reactions during DNA recombination. Interacts with BRCA1 and either directly or indirectly with p53. Interacts with XRCC3, RAD54L and RAD54B. Interacts with the BCDX2 subcomplex RAD51C:RAD51B. Component of the homologous recombination repair (HR) complex composed of ERCC5/XPG, BRCA2, PALB2, DSS1 and RAD51. Interacts directly with PALB2 which may serve as a scaffold for a HR complex containing PALB2, BRCA2, RAD51C, RAD51 and XRCC3. Interacts with RAD51AP1 and RAD51AP2. Interacts with CHEK1, and this may require prior phosphorylation of CHEK1. Interacts with the MND1-PSMC3IP heterodimer. Found in a complex, at least composed of BLM, RAD51 and SPIDR; the complex formation is mediated by SPIDR. Interacts with SPIDR; the interaction is direct and recruits RAD51 to DNA damage sites. Interacts with FIGNL1 (via N-terminal one-half region); the interaction is direct. Interacts with RAD51AP1 (via C-terminal region); the interaction is direct. Interacts with NABP2, RPA1, PALB2 and RAD51. Interacts with SWI5/C9orf119, and at lower level with SFR1/MEIR5. Interacts with hyperphosphorylated RPA2; this interaction is necessary for efficient recruitment to chromatin in response to DNA damage. Interacts with SWSAP1; involved in homologous recombination repair. Interacts with PARPBP, BRCA2 and RECQL5; these interactions interfere with the formation of the RAD51-DNA homologous recombination structure. Interacts with POLQ; POLQ acts as an inhibitor of homology-recombination repair (HR) pathway by limiting RAD51 accumulation at resected ends. Interacts with POLN. Interacts with FBH1. Interacts with RFWD3. Interacts with the MCM8-MCM9 complex; the interaction recruits RAD51 to DNA damage sites. Component of a multiprotein complex with MEIOB and SPATA22. Interacts with the complex BRME1:HSF2BP:BRCA2. Interacts with HELQ; stimulating HELQ DNA helicase activity and ability to unwing DNA. Interacts with MMS22L; the interaction is direct and promotes recruitment of RAD51 to sites of DNA damage. Interacts with the ATAD5 RFC-like complex. Within the ATAD5 RFC-like complex, interacts with ATAD5 (via N-terminus); the interaction is direct and enhanced under replication stress. Interacts with WDR48; the interaction is enhanced under replication stress. Interacts with DNA helicase ZGRF1; the interaction promotes RAD51 strand exchange activity. Interacts (when phosphorylated) with TOPBP1; interaction takes place following phosphorylation by CK2 and PLK1 and promotes recruitment to DNA damage sites. Interacts with GRB2; this interaction inhibits RAD51 ATPase activity to stabilize RAD51 on stalled replication forks. In terms of processing, ubiquitinated by the SCF(FBH1) E3 ubiquitin ligase complex, regulating RAD51 subcellular location and preventing its association with DNA. Ubiquitinated by RFWD3 in response to DNA damage: ubiquitination leads to degradation by the proteasome, promoting homologous recombination. Post-translationally, phosphorylation of Thr-309 by CHEK1 may enhance association with chromatin at sites of DNA damage and promote DNA repair by homologous recombination. Phosphorylated at Ser-14 by PLK1, triggering phosphorylation at Thr-13 by CK2, thereby promoting interaction with TOPBP1 and recruitment to DNA damage sites during S-phase. Phosphorylation by ABL1 inhibits function. In terms of tissue distribution, expressed in the testes (at protein level). Expressed in the brain (at protein level). Expressed in the thymus, spleen, ovary and small intestine.

It localises to the nucleus. It is found in the cytoplasm. The protein resides in the perinuclear region. The protein localises to the mitochondrion matrix. Its subcellular location is the chromosome. It localises to the cytoskeleton. It is found in the microtubule organizing center. The protein resides in the centrosome. Functionally, plays an important role in homologous strand exchange, a key step in DNA repair through homologous recombination (HR). Binds to single-stranded DNA in an ATP-dependent manner to form nucleoprotein filaments which are essential for the homology search and strand exchange. Catalyzes the recognition of homology and strand exchange between homologous DNA partners to form a joint molecule between a processed DNA break and the repair template. Recruited to resolve stalled replication forks during replication stress. Part of a PALB2-scaffolded HR complex containing BRCA2 and RAD51C and which is thought to play a role in DNA repair by HR. Plays a role in regulating mitochondrial DNA copy number under conditions of oxidative stress in the presence of RAD51C and XRCC3. Also involved in interstrand cross-link repair. The chain is DNA repair protein RAD51 homolog 1 from Mus musculus (Mouse).